A 162-amino-acid polypeptide reads, in one-letter code: Cyclic pyranopterin monophosphate synthase (162 aa).

Substrate-binding positions include 75–77 and 113–114; these read LCH and ME. Residue Asp128 is part of the active site.

This sequence belongs to the MoaC family. In terms of assembly, homohexamer; trimer of dimers.

It carries out the reaction (8S)-3',8-cyclo-7,8-dihydroguanosine 5'-triphosphate = cyclic pyranopterin phosphate + diphosphate. The protein operates within cofactor biosynthesis; molybdopterin biosynthesis. Functionally, catalyzes the conversion of (8S)-3',8-cyclo-7,8-dihydroguanosine 5'-triphosphate to cyclic pyranopterin monophosphate (cPMP). This chain is Cyclic pyranopterin monophosphate synthase, found in Burkholderia ambifaria (strain ATCC BAA-244 / DSM 16087 / CCUG 44356 / LMG 19182 / AMMD) (Burkholderia cepacia (strain AMMD)).